A 623-amino-acid polypeptide reads, in one-letter code: Glutamyl-tRNA(Gln) amidotransferase subunit E (623 aa).

The protein belongs to the GatB/GatE family. GatE subfamily. Heterodimer of GatD and GatE.

It catalyses the reaction L-glutamyl-tRNA(Gln) + L-glutamine + ATP + H2O = L-glutaminyl-tRNA(Gln) + L-glutamate + ADP + phosphate + H(+). Functionally, allows the formation of correctly charged Gln-tRNA(Gln) through the transamidation of misacylated Glu-tRNA(Gln) in organisms which lack glutaminyl-tRNA synthetase. The reaction takes place in the presence of glutamine and ATP through an activated gamma-phospho-Glu-tRNA(Gln). The GatDE system is specific for glutamate and does not act on aspartate. The protein is Glutamyl-tRNA(Gln) amidotransferase subunit E of Haloarcula marismortui (strain ATCC 43049 / DSM 3752 / JCM 8966 / VKM B-1809) (Halobacterium marismortui).